Consider the following 152-residue polypeptide: Transcriptional regulator MraZ (152 aa).

SpoVT-AbrB domains lie at 5-52 and 81-124; these read ASAI…PIHE and AHEV…DEQS.

This sequence belongs to the MraZ family. As to quaternary structure, forms oligomers.

It localises to the cytoplasm. It is found in the nucleoid. In Shewanella baltica (strain OS223), this protein is Transcriptional regulator MraZ.